The primary structure comprises 983 residues: Glycine dehydrogenase (decarboxylating) (983 aa).

The residue at position 726 (Lys-726) is an N6-(pyridoxal phosphate)lysine.

The protein belongs to the GcvP family. The glycine cleavage system is composed of four proteins: P, T, L and H. Pyridoxal 5'-phosphate is required as a cofactor.

It catalyses the reaction N(6)-[(R)-lipoyl]-L-lysyl-[glycine-cleavage complex H protein] + glycine + H(+) = N(6)-[(R)-S(8)-aminomethyldihydrolipoyl]-L-lysyl-[glycine-cleavage complex H protein] + CO2. Functionally, the glycine cleavage system catalyzes the degradation of glycine. The P protein binds the alpha-amino group of glycine through its pyridoxal phosphate cofactor; CO(2) is released and the remaining methylamine moiety is then transferred to the lipoamide cofactor of the H protein. This is Glycine dehydrogenase (decarboxylating) from Synechocystis sp. (strain ATCC 27184 / PCC 6803 / Kazusa).